A 1733-amino-acid polypeptide reads, in one-letter code: Gag-Pol polyprotein (1733 aa).

A lipid anchor (N-myristoyl glycine; by host) is attached at Gly-2. Residues 108–121 (LPTAPVLPPGPSAQ) are compositionally biased toward pro residues. Disordered regions lie at residues 108–218 (LPTA…LRMG), 449–469 (KEER…RRRH), and 511–550 (WAKD…EPRI). The PTAP/PSAP motif signature appears at 109 to 112 (PTAP). The LYPX(n)L motif motif lies at 128–132 (LYPAL). A PPXY motif motif is present at residues 161 to 164 (PPPY). A Phosphoserine; by host modification is found at Ser-190. The stretch at 436-476 (EEREERIRREIEEKEERRRAEDEQRERERDRRRHREMSKLL) forms a coiled coil. Residues 449–464 (KEERRRAEDEQRERER) are compositionally biased toward basic and acidic residues. Residues 500–517 (DQCAYCKEKGHWAKDCPK) form a CCHC-type zinc finger. The span at 526 to 535 (RPQTSLLTLG) shows a compositional bias: low complexity. The region spanning 559-629 (VTFLVDTGAQ…CPYPLLGRDL (71 aa)) is the Peptidase A2 domain. The active-site Protease; shared with dimeric partner is Asp-564. Residues Tyr-721, Asp-771, Arg-773, and Pro-787 each contribute to the RNA site. A Reverse transcriptase domain is found at 739–930 (LDQGILVPCQ…KQVKYLGYLL (192 aa)). Asp-807 contacts Mg(2+). The RNA site is built by Asn-851 and Pro-853. Mg(2+)-binding residues include Asp-881 and Asp-882. 4 residues coordinate DNA: Arg-941, Arg-955, Arg-958, and Phe-966. RNA-binding residues include Lys-1054 and Lys-1055. A DNA-binding site is contributed by Trp-1063. Lys-1082 is an RNA binding site. Arg-1113 contributes to the DNA binding site. In terms of domain architecture, RNase H type-1 spans 1172 to 1318 (PDADYTWYTD…ADQAAREAAM (147 aa)). Position 1181 (Asp-1181) interacts with Mg(2+). RNA-binding residues include Ser-1184 and Leu-1186. DNA-binding residues include Gln-1187, Ser-1214, and Gln-1216. Mg(2+) is bound by residues Glu-1219 and Asp-1240. RNA is bound by residues Arg-1242 and Arg-1266. The Mg(2+) site is built by Asp-1310, Asp-1453, and Asp-1512. The region spanning 1442-1600 (RGHRPGTHWE…TPYEILYGAP (159 aa)) is the Integrase catalytic domain.

In terms of assembly, homohexamer. Further associates as homomultimer. The virus core is composed of a lattice formed from hexagonal rings, each containing six capsid monomers. Homodimer. The protease is a homodimer, whose active site consists of two apposed aspartic acid residues. The reverse transcriptase is a monomer. The cofactor is Mg(2+). Mn(2+) is required as a cofactor. Post-translationally, specific enzymatic cleavages by the viral protease yield mature proteins. The protease is released by autocatalytic cleavage. The polyprotein is cleaved during and after budding, this process is termed maturation. Sumoylated. Required for virus replication. In terms of processing, phosphorylated on serine residues.

The protein localises to the host cell membrane. It is found in the virion. It catalyses the reaction DNA(n) + a 2'-deoxyribonucleoside 5'-triphosphate = DNA(n+1) + diphosphate. The enzyme catalyses Endonucleolytic cleavage to 5'-phosphomonoester.. In terms of biological role, plays a role in budding and is processed by the viral protease during virion maturation outside the cell. During budding, it recruits, in a PPXY-dependent or independent manner, Nedd4-like ubiquitin ligases that conjugate ubiquitin molecules to Gag, or to Gag binding host factors. Interaction with HECT ubiquitin ligases probably link the viral protein to the host ESCRT pathway and facilitate release. Targets Gag and gag-pol polyproteins to the plasma membrane via a multipartite membrane binding signal, that includes its myristoylated N-terminus. Also mediates nuclear localization of the pre-integration complex. Functionally, forms the spherical core of the virion that encapsulates the genomic RNA-nucleocapsid complex. Its function is as follows. Involved in the packaging and encapsidation of two copies of the genome. Binds with high affinity to conserved UCUG elements within the packaging signal, located near the 5'-end of the genome. This binding is dependent on genome dimerization. In terms of biological role, the aspartyl protease mediates proteolytic cleavages of Gag and Gag-Pol polyproteins during or shortly after the release of the virion from the plasma membrane. Cleavages take place as an ordered, step-wise cascade to yield mature proteins. This process is called maturation. Displays maximal activity during the budding process just prior to particle release from the cell. Multifunctional enzyme that converts the viral dimeric RNA genome into dsDNA in the cytoplasm, shortly after virus entry into the cell. This enzyme displays a DNA polymerase activity that can copy either DNA or RNA templates, and a ribonuclease H (RNase H) activity that cleaves the RNA strand of RNA-DNA heteroduplexes in a partially processive 3' to 5' endonucleasic mode. Conversion of viral genomic RNA into dsDNA requires many steps. A tRNA binds to the primer-binding site (PBS) situated at the 5' end of the viral RNA. RT uses the 3' end of the tRNA primer to perform a short round of RNA-dependent minus-strand DNA synthesis. The reading proceeds through the U5 region and ends after the repeated (R) region which is present at both ends of viral RNA. The portion of the RNA-DNA heteroduplex is digested by the RNase H, resulting in a ssDNA product attached to the tRNA primer. This ssDNA/tRNA hybridizes with the identical R region situated at the 3' end of viral RNA. This template exchange, known as minus-strand DNA strong stop transfer, can be either intra- or intermolecular. RT uses the 3' end of this newly synthesized short ssDNA to perform the RNA-dependent minus-strand DNA synthesis of the whole template. RNase H digests the RNA template except for a polypurine tract (PPT) situated at the 5' end of the genome. It is not clear if both polymerase and RNase H activities are simultaneous. RNase H probably can proceed both in a polymerase-dependent (RNA cut into small fragments by the same RT performing DNA synthesis) and a polymerase-independent mode (cleavage of remaining RNA fragments by free RTs). Secondly, RT performs DNA-directed plus-strand DNA synthesis using the PPT that has not been removed by RNase H as primers. PPT and tRNA primers are then removed by RNase H. The 3' and 5' ssDNA PBS regions hybridize to form a circular dsDNA intermediate. Strand displacement synthesis by RT to the PBS and PPT ends produces a blunt ended, linear dsDNA copy of the viral genome that includes long terminal repeats (LTRs) at both ends. Functionally, catalyzes viral DNA integration into the host chromosome, by performing a series of DNA cutting and joining reactions. This enzyme activity takes place after virion entry into a cell and reverse transcription of the RNA genome in dsDNA. The first step in the integration process is 3' processing. This step requires a complex comprising the viral genome, matrix protein and integrase. This complex is called the pre-integration complex (PIC). The integrase protein removes 2 nucleotides from each 3' end of the viral DNA, leaving recessed CA OH's at the 3' ends. In the second step that requires cell division, the PIC enters cell nucleus. In the third step, termed strand transfer, the integrase protein joins the previously processed 3' ends to the 5' ends of strands of target cellular DNA at the site of integration. The last step is viral DNA integration into host chromosome. The protein is Gag-Pol polyprotein (gag-pol) of Homo sapiens (Human).